A 467-amino-acid polypeptide reads, in one-letter code: Sodium-dependent phosphate transport protein 1 (467 aa).

N41, N49, and N58 each carry an N-linked (GlcNAc...) asparagine glycan. 10 consecutive transmembrane segments (helical) span residues 81-101, 119-139, 178-198, 200-220, 257-277, 301-321, 339-359, 365-385, 401-421, and 433-453; these read GIIL…VGYF, SVLS…VVVC, FLLG…SLGW, MVFY…FVLF, AILK…FFWS, GFLS…AGQL, LFTA…PYLS, IVIF…GVFI, CSTL…GLIL, and FILM…VATA.

It belongs to the major facilitator superfamily. Sodium/anion cotransporter family. Interacts with PDZK1. Expressed in kidney cortex, liver and brain but not in other tissues.

It localises to the apical cell membrane. It catalyses the reaction 3 Na(+)(out) + phosphate(out) = 3 Na(+)(in) + phosphate(in). The enzyme catalyses urate(out) = urate(in). Functionally, important for the resorption of phosphate by the kidney. May be involved in actively transporting phosphate into cells via Na(+) cotransport in the renal brush border membrane. Plays a role in urate transport in the kidney. The protein is Sodium-dependent phosphate transport protein 1 (SLC17A1) of Homo sapiens (Human).